The sequence spans 199 residues: 7-methyl-GTP pyrophosphatase (199 aa).

Asp73 serves as the catalytic Proton acceptor.

This sequence belongs to the Maf family. YceF subfamily. The cofactor is a divalent metal cation.

The protein resides in the cytoplasm. The catalysed reaction is N(7)-methyl-GTP + H2O = N(7)-methyl-GMP + diphosphate + H(+). Its function is as follows. Nucleoside triphosphate pyrophosphatase that hydrolyzes 7-methyl-GTP (m(7)GTP). May have a dual role in cell division arrest and in preventing the incorporation of modified nucleotides into cellular nucleic acids. This Bordetella bronchiseptica (strain ATCC BAA-588 / NCTC 13252 / RB50) (Alcaligenes bronchisepticus) protein is 7-methyl-GTP pyrophosphatase.